We begin with the raw amino-acid sequence, 259 residues long: 4-hydroxy-tetrahydrodipicolinate reductase (259 aa).

NAD(+) is bound by residues 9–14 (GAGGRM) and glutamate 35. Arginine 36 contributes to the NADP(+) binding site. NAD(+)-binding positions include 92-94 (GTT) and 116-119 (APNM). Histidine 149 serves as the catalytic Proton donor/acceptor. Histidine 150 contributes to the (S)-2,3,4,5-tetrahydrodipicolinate binding site. Lysine 153 acts as the Proton donor in catalysis. Position 159-160 (159-160 (GT)) interacts with (S)-2,3,4,5-tetrahydrodipicolinate.

Belongs to the DapB family.

The protein resides in the cytoplasm. The catalysed reaction is (S)-2,3,4,5-tetrahydrodipicolinate + NAD(+) + H2O = (2S,4S)-4-hydroxy-2,3,4,5-tetrahydrodipicolinate + NADH + H(+). It catalyses the reaction (S)-2,3,4,5-tetrahydrodipicolinate + NADP(+) + H2O = (2S,4S)-4-hydroxy-2,3,4,5-tetrahydrodipicolinate + NADPH + H(+). It functions in the pathway amino-acid biosynthesis; L-lysine biosynthesis via DAP pathway; (S)-tetrahydrodipicolinate from L-aspartate: step 4/4. Functionally, catalyzes the conversion of 4-hydroxy-tetrahydrodipicolinate (HTPA) to tetrahydrodipicolinate. The polypeptide is 4-hydroxy-tetrahydrodipicolinate reductase (Oleidesulfovibrio alaskensis (strain ATCC BAA-1058 / DSM 17464 / G20) (Desulfovibrio alaskensis)).